We begin with the raw amino-acid sequence, 194 residues long: Large ribosomal subunit protein bL27c (194 aa).

The transit peptide at 1 to 57 (MAVTTSMSFNLMASFRGMSLSSSSSSSFFKGEFGPSSLRLPNKSPLSVSPFPLTIES) directs the protein to the chloroplast. The interval 57 to 76 (SAHKKGAGSTKNGRDSKGQR) is disordered.

In terms of assembly, component of the chloroplast large ribosomal subunit (LSU). Mature 70S chloroplast ribosomes of higher plants consist of a small (30S) and a large (50S) subunit. The 30S small subunit contains 1 molecule of ribosomal RNA (16S rRNA) and 24 different proteins. The 50S large subunit contains 3 rRNA molecules (23S, 5S and 4.5S rRNA) and 33 different proteins.

The protein localises to the plastid. The protein resides in the chloroplast. In terms of biological role, component of the chloroplast ribosome (chloro-ribosome), a dedicated translation machinery responsible for the synthesis of chloroplast genome-encoded proteins, including proteins of the transcription and translation machinery and components of the photosynthetic apparatus. The sequence is that of Large ribosomal subunit protein bL27c (RPL27) from Spinacia oleracea (Spinach).